Here is a 136-residue protein sequence, read N- to C-terminus: Large-conductance mechanosensitive channel (136 aa).

Transmembrane regions (helical) follow at residues 9–29 (AFAV…GAAF) and 78–98 (FIQT…GVKA).

This sequence belongs to the MscL family. Homopentamer.

The protein localises to the cell inner membrane. In terms of biological role, channel that opens in response to stretch forces in the membrane lipid bilayer. May participate in the regulation of osmotic pressure changes within the cell. This is Large-conductance mechanosensitive channel from Azotobacter vinelandii (strain DJ / ATCC BAA-1303).